A 407-amino-acid chain; its full sequence is Tyrosine--tRNA ligase (407 aa).

Tyr-36 contacts L-tyrosine. The short motif at 41-50 (PTADSLHIGH) is the 'HIGH' region element. L-tyrosine is bound by residues Tyr-169 and Gln-173. The 'KMSKS' region motif lies at 229–233 (KMGKT). Lys-232 is an ATP binding site. An S4 RNA-binding domain is found at 341-407 (KGILDILVET…KKSYNRIVIE (67 aa)).

Belongs to the class-I aminoacyl-tRNA synthetase family. TyrS type 1 subfamily. As to quaternary structure, homodimer.

The protein localises to the cytoplasm. It carries out the reaction tRNA(Tyr) + L-tyrosine + ATP = L-tyrosyl-tRNA(Tyr) + AMP + diphosphate + H(+). In terms of biological role, catalyzes the attachment of tyrosine to tRNA(Tyr) in a two-step reaction: tyrosine is first activated by ATP to form Tyr-AMP and then transferred to the acceptor end of tRNA(Tyr). The protein is Tyrosine--tRNA ligase of Clostridium tetani (strain Massachusetts / E88).